The chain runs to 286 residues: 4-hydroxybenzoate octaprenyltransferase (286 aa).

7 consecutive transmembrane segments (helical) span residues 21–40, 95–115, 142–162, 167–187, 210–230, 235–255, and 266–286; these read GTLL…AGGM, ILFV…NGLV, FLGI…TGEV, WWLF…YAMV, QIIG…GWSA, LYGL…MLIF, and FLNN…DYLI.

Belongs to the UbiA prenyltransferase family. Mg(2+) serves as cofactor.

The protein localises to the cell inner membrane. It catalyses the reaction all-trans-octaprenyl diphosphate + 4-hydroxybenzoate = 4-hydroxy-3-(all-trans-octaprenyl)benzoate + diphosphate. It functions in the pathway cofactor biosynthesis; ubiquinone biosynthesis. Functionally, catalyzes the prenylation of para-hydroxybenzoate (PHB) with an all-trans polyprenyl group. Mediates the second step in the final reaction sequence of ubiquinone-8 (UQ-8) biosynthesis, which is the condensation of the polyisoprenoid side chain with PHB, generating the first membrane-bound Q intermediate 3-octaprenyl-4-hydroxybenzoate. The sequence is that of 4-hydroxybenzoate octaprenyltransferase from Shewanella baltica (strain OS185).